The following is a 49-amino-acid chain: MRPMSRRSLDWTYSLLLLAIVLLSWGFVIYASTVAARRQLQKEFPDKFF.

The helical transmembrane segment at 11-31 (WTYSLLLLAIVLLSWGFVIYA) threads the bilayer.

The protein resides in the membrane. This chain is Small integral membrane protein 27, found in Mus musculus (Mouse).